The chain runs to 378 residues: Cytochrome b (378 aa).

Helical transmembrane passes span 34–54, 78–99, 114–134, and 179–199; these read FGSLLGLCLIIQILTGLFLAM, WLLRTLHANGASFFFICIYLHV, WLIGVIILFLVMGTAFMGYVL, and FFTFHFILPFIVLAMTMIHLL. The heme b site is built by His-84 and His-98. Residues His-183 and His-197 each coordinate heme b. Residue His-202 participates in a ubiquinone binding. 4 helical membrane-spanning segments follow: residues 227 to 247, 289 to 309, 321 to 341, and 348 to 368; these read FKDIVGFIVMIFILISLVLIS, LGGVIALVLSIAILMILPFYN, INQVMFWSMLVTVILLTWIGA, and YVLIGQILTVVYFLYYLVNPL.

Belongs to the cytochrome b family. The main subunits of complex b-c1 are: cytochrome b, cytochrome c1 and the Rieske protein. Requires heme b as cofactor.

The protein localises to the mitochondrion inner membrane. Its function is as follows. Component of the ubiquinol-cytochrome c reductase complex (complex III or cytochrome b-c1 complex) that is part of the mitochondrial respiratory chain. The b-c1 complex mediates electron transfer from ubiquinol to cytochrome c. Contributes to the generation of a proton gradient across the mitochondrial membrane that is then used for ATP synthesis. This is Cytochrome b (mt:Cyt-b) from Drosophila simulans (Fruit fly).